Reading from the N-terminus, the 334-residue chain is Triplex capsid protein 1 (334 aa).

Belongs to the herpesviridae TRX1 protein family. As to quaternary structure, interacts with TRX2, MCP and capsid vertex component 2/CVC2.

It localises to the virion. It is found in the host nucleus. In terms of biological role, structural component of the T=16 icosahedral capsid. The capsid is composed of pentamers and hexamers of major capsid protein/MCP, which are linked together by heterotrimers called triplexes. These triplexes are formed by a single molecule of triplex protein 1/TRX1 and two copies of triplex protein 2/TRX2. Additionally, TRX1 is required for efficient transport of TRX2 to the nucleus, which is the site of capsid assembly. This Connochaetes taurinus (Blue wildebeest) protein is Triplex capsid protein 1.